The primary structure comprises 586 residues: Guanylate-binding protein 5 (586 aa).

An NLRP3-binding region spans residues 1-306 (MALEIHMSDP…TYVNAISSGD (306 aa)). Residues 1–309 (MALEIHMSDP…NAISSGDLPC (309 aa)) form a GTPase domain (Globular) region. The 242-residue stretch at 35-276 (TQPVVVVAIV…FCSYIFSHSM (242 aa)) folds into the GB1/RHD3-type G domain. Residues 45 to 52 (GLYRTGKS), 67 to 69 (VAS), 181 to 182 (RD), and Leu245 each bind GTP. Residues 529–586 (MEIAKQNWLAEQQKMQEQQMQEQAAQLSTTFQAQNRSLLSELQHAQRTVNNDDPCVLL) form a required for tetramerization, but not for dimerization region. A Cysteine methyl ester modification is found at Cys583. Residue Cys583 is the site of S-geranylgeranyl cysteine attachment. Positions 584 to 586 (VLL) are cleaved as a propeptide — removed in mature form.

This sequence belongs to the TRAFAC class dynamin-like GTPase superfamily. GB1/RHD3 GTPase family. GB1 subfamily. As to quaternary structure, homodimer; homodimerizes upon GTP-binding, forming a close face-to-face dimer. Heterodimer with other family members, including GBP1, GBP2, GBP3 and GBP4. May also form tetramers (dimer of dimers) in the presence of GTP. Interacts with NLRP3, possibly in its tetrameric form, and promotes PYCARD/ASC polymerization. Homodimer; homodimerizes upon GTP-binding. GDP-bound form remains homodimeric. In terms of assembly, homodimer; homodimerizes upon GTP-binding. GDP-bound is monomeric. Post-translationally, isoprenylation is required for proper subcellular location. In terms of tissue distribution, expressed in peripheral blood monocytes (at protein level).

It is found in the cytoplasmic vesicle membrane. Its subcellular location is the golgi apparatus membrane. The protein resides in the cytoplasm. The enzyme catalyses GTP + H2O = GDP + phosphate + H(+). Functionally, interferon (IFN)-inducible GTPase that plays important roles in innate immunity against a diverse range of bacterial, viral and protozoan pathogens. Hydrolyzes GTP, but in contrast to other family members, does not produce GMP. Following infection, recruited to the pathogen-containing vacuoles or vacuole-escaped bacteria and acts as a positive regulator of inflammasome assembly by promoting the release of inflammasome ligands from bacteria. Acts by promoting lysis of pathogen-containing vacuoles, releasing pathogens into the cytosol. Following pathogen release in the cytosol, promotes recruitment of proteins that mediate bacterial cytolysis: this liberates ligands that are detected by inflammasomes, such as lipopolysaccharide (LPS) that activates the non-canonical CASP4/CASP11 inflammasome or double-stranded DNA (dsDNA) that activates the AIM2 inflammasome. As an activator of NLRP3 inflammasome assembly: promotes selective NLRP3 inflammasome assembly in response to microbial and soluble, but not crystalline, agents. Independently of its GTPase activity, acts as an inhibitor of various viruses infectivity, such as HIV-1, Zika and influenza A viruses, by inhibiting FURIN-mediated maturation of viral envelope proteins. In terms of biological role, antigenic tumor-specific truncated splice form. In Homo sapiens (Human), this protein is Guanylate-binding protein 5.